We begin with the raw amino-acid sequence, 477 residues long: MNTISSHSPIHVVGGGLAGSEAAWQIASSGVPVILHEMRGVRGTDAHKTDGLAELVCSNSFRSDDATSNAVGVIHAEMRMAGSLIMAAADRCQVPAGGALAVDRDGFSEAVTKAVHDHPLITVVREEVTGLPPRDWDLAIVATGPLTAPSLASAIQTETGEDSLAFFDAIAPIVYRESIDMDICWYQSRYDKVGPGGTGKDYINCPMDEAQYNAFVDALILGDTVGFKEWEGTPYFDGCLPIEVMAERGRETLRHGPMKPMGLTNAHNPTVKAYAVVQLRQDNALGTLYNMVGFQTKLKYGAQADIFRMIPGLENAEFARLGGLHRNTYINSPTLLDPSLTLKSRPGLRFAGQITGCEGYVESASVGLMAGRFAAAERKGEAISLPPATTALGSLLGHITGGHLVTDEEPGKRSFQPMNINFGLFPELQPGSIVKPEGVKRFRGKDKTIMKRQLIARRALADCATWLGQESTLAESA.

Residue 14-19 participates in FAD binding; it reads GGGLAG.

It belongs to the MnmG family. TrmFO subfamily. Requires FAD as cofactor.

The protein resides in the cytoplasm. It catalyses the reaction uridine(54) in tRNA + (6R)-5,10-methylene-5,6,7,8-tetrahydrofolate + NADH + H(+) = 5-methyluridine(54) in tRNA + (6S)-5,6,7,8-tetrahydrofolate + NAD(+). It carries out the reaction uridine(54) in tRNA + (6R)-5,10-methylene-5,6,7,8-tetrahydrofolate + NADPH + H(+) = 5-methyluridine(54) in tRNA + (6S)-5,6,7,8-tetrahydrofolate + NADP(+). Catalyzes the folate-dependent formation of 5-methyl-uridine at position 54 (M-5-U54) in all tRNAs. The sequence is that of Methylenetetrahydrofolate--tRNA-(uracil-5-)-methyltransferase TrmFO from Rhizobium johnstonii (strain DSM 114642 / LMG 32736 / 3841) (Rhizobium leguminosarum bv. viciae).